A 606-amino-acid polypeptide reads, in one-letter code: Homeobox protein B-H1 (606 aa).

The span at Met1–Glu14 shows a compositional bias: polar residues. Disordered regions lie at residues Met1–Ala65, Tyr104–Ala188, Ala261–Asp340, and Ala508–Val606. Residues Gln21–Leu40 show a composition bias toward basic residues. Low complexity predominate over residues Gln41–Ala65. Over residues Gln108–His118 the composition is skewed to basic residues. Residues His119–Asn138 are compositionally biased toward low complexity. Basic residues predominate over residues His166–Ala188. A compositionally biased stretch (acidic residues) spans Glu266–Glu284. Gly residues predominate over residues Gly286 to Ser295. Over residues His297–Asn314 the composition is skewed to basic and acidic residues. The segment covering Ser315–Ser325 has biased composition (polar residues). The segment at residues Gln331–Thr390 is a DNA-binding region (homeobox). Residues Gly513–Ser522 show a composition bias toward pro residues. The segment covering Ser523–Pro534 has biased composition (low complexity). The segment covering Ala561–Pro576 has biased composition (pro residues).

Belongs to the Antp homeobox family. As to expression, abundant in the eye-antenna imaginal disk.

It localises to the nucleus. Functionally, functionally required in R1 and R6 receptor cells and primary pigment cells for normal eye development. This Drosophila ananassae (Fruit fly) protein is Homeobox protein B-H1 (B-H1).